Reading from the N-terminus, the 182-residue chain is ATP-dependent protease subunit HslV (182 aa).

Thr10 is an active-site residue. Na(+) contacts are provided by Ala166, Cys169, and Ser172.

This sequence belongs to the peptidase T1B family. HslV subfamily. As to quaternary structure, a double ring-shaped homohexamer of HslV is capped on each side by a ring-shaped HslU homohexamer. The assembly of the HslU/HslV complex is dependent on binding of ATP.

The protein resides in the cytoplasm. It carries out the reaction ATP-dependent cleavage of peptide bonds with broad specificity.. Its activity is regulated as follows. Allosterically activated by HslU binding. Its function is as follows. Protease subunit of a proteasome-like degradation complex believed to be a general protein degrading machinery. In Rickettsia typhi (strain ATCC VR-144 / Wilmington), this protein is ATP-dependent protease subunit HslV.